Consider the following 184-residue polypeptide: Probable gluconokinase (184 aa).

Residue 11–18 coordinates ATP; that stretch reads GVSGSGKS.

This sequence belongs to the gluconokinase GntK/GntV family.

The catalysed reaction is D-gluconate + ATP = 6-phospho-D-gluconate + ADP + H(+). Its pathway is carbohydrate acid metabolism; D-gluconate degradation. The polypeptide is Probable gluconokinase (Idnk) (Mus musculus (Mouse)).